A 407-amino-acid chain; its full sequence is S-adenosylmethionine synthase (407 aa).

His-19 contacts ATP. Asp-21 lines the Mg(2+) pocket. Residue Glu-47 participates in K(+) binding. Positions 60 and 103 each coordinate L-methionine. The flexible loop stretch occupies residues 103–113; sequence QSQEIADGVDN. The disordered stretch occupies residues 107 to 134; sequence IADGVDNSDEARTNGDVEEDDRAGAGDQ. ATP contacts are provided by residues 178–180, Asp-258, 264–265, Ala-281, and Lys-285; these read DGK and RK. L-methionine is bound at residue Asp-258. Residue Lys-289 coordinates L-methionine.

It belongs to the AdoMet synthase family. In terms of assembly, homotetramer; dimer of dimers. Requires Mg(2+) as cofactor. The cofactor is K(+).

The protein resides in the cytoplasm. It carries out the reaction L-methionine + ATP + H2O = S-adenosyl-L-methionine + phosphate + diphosphate. It participates in amino-acid biosynthesis; S-adenosyl-L-methionine biosynthesis; S-adenosyl-L-methionine from L-methionine: step 1/1. Catalyzes the formation of S-adenosylmethionine (AdoMet) from methionine and ATP. The overall synthetic reaction is composed of two sequential steps, AdoMet formation and the subsequent tripolyphosphate hydrolysis which occurs prior to release of AdoMet from the enzyme. This chain is S-adenosylmethionine synthase, found in Corynebacterium glutamicum (strain ATCC 13032 / DSM 20300 / JCM 1318 / BCRC 11384 / CCUG 27702 / LMG 3730 / NBRC 12168 / NCIMB 10025 / NRRL B-2784 / 534).